We begin with the raw amino-acid sequence, 140 residues long: Large ribosomal subunit protein uL11 (140 aa).

Belongs to the universal ribosomal protein uL11 family. As to quaternary structure, part of the ribosomal stalk of the 50S ribosomal subunit. Interacts with L10 and the large rRNA to form the base of the stalk. L10 forms an elongated spine to which L12 dimers bind in a sequential fashion forming a multimeric L10(L12)X complex. In terms of processing, one or more lysine residues are methylated.

Functionally, forms part of the ribosomal stalk which helps the ribosome interact with GTP-bound translation factors. This Staphylococcus aureus (strain Mu3 / ATCC 700698) protein is Large ribosomal subunit protein uL11.